We begin with the raw amino-acid sequence, 317 residues long: Secreted mono- and diacylglycerol lipase 3 (317 aa).

The first 29 residues, 1-29 (MMFADDLVRMAVLRFITVALAAITNVANA), serve as a signal peptide directing secretion. A disulfide bond links C61 and C310. N-linked (GlcNAc...) asparagine glycosylation occurs at N108. The active-site Nucleophile is S175. The N-linked (GlcNAc...) asparagine glycan is linked to N194. The active site involves D234. The N-linked (GlcNAc...) asparagine glycan is linked to N258. Residue H294 is part of the active site.

It belongs to the AB hydrolase superfamily. Lipase family. Class 3 subfamily.

The protein localises to the secreted. It carries out the reaction a monoacylglycerol + H2O = glycerol + a fatty acid + H(+). The enzyme catalyses a diacylglycerol + H2O = a monoacylglycerol + a fatty acid + H(+). Its function is as follows. Secreted mono- and diacylglycerol lipase involved in plant virulence. Has a substrate preference for p-nitrophenyl esters with a carbon chain length of C10 (p-nitrophenyl caprate). The protein is Secreted mono- and diacylglycerol lipase 3 of Gibberella zeae (strain ATCC MYA-4620 / CBS 123657 / FGSC 9075 / NRRL 31084 / PH-1) (Wheat head blight fungus).